The sequence spans 165 residues: ATP synthase subunit b (165 aa).

Residues 5–27 form a helical membrane-spanning segment; that stretch reads INSTTLGNIIITLGSVFLLYYLI.

The protein belongs to the ATPase B chain family. F-type ATPases have 2 components, F(1) - the catalytic core - and F(0) - the membrane proton channel. F(1) has five subunits: alpha(3), beta(3), gamma(1), delta(1), epsilon(1). F(0) has three main subunits: a(1), b(2) and c(10-14). The alpha and beta chains form an alternating ring which encloses part of the gamma chain. F(1) is attached to F(0) by a central stalk formed by the gamma and epsilon chains, while a peripheral stalk is formed by the delta and b chains.

The protein localises to the cell membrane. Functionally, f(1)F(0) ATP synthase produces ATP from ADP in the presence of a proton or sodium gradient. F-type ATPases consist of two structural domains, F(1) containing the extramembraneous catalytic core and F(0) containing the membrane proton channel, linked together by a central stalk and a peripheral stalk. During catalysis, ATP synthesis in the catalytic domain of F(1) is coupled via a rotary mechanism of the central stalk subunits to proton translocation. In terms of biological role, component of the F(0) channel, it forms part of the peripheral stalk, linking F(1) to F(0). The protein is ATP synthase subunit b of Streptococcus thermophilus (strain CNRZ 1066).